Reading from the N-terminus, the 89-residue chain is Small ribosomal subunit protein bS20 (89 aa).

Belongs to the bacterial ribosomal protein bS20 family.

Functionally, binds directly to 16S ribosomal RNA. The chain is Small ribosomal subunit protein bS20 from Syntrophus aciditrophicus (strain SB).